We begin with the raw amino-acid sequence, 430 residues long: Phosphoribosylamine--glycine ligase (430 aa).

In terms of domain architecture, ATP-grasp spans 109–314 (RGLMNKYGID…FLTIAEHIIN (206 aa)). 136–192 (IREYPGDLAVKPTGLTGGKGVKVMGEQVDREGAVEYAMTLKDQVIILEERLLGEEFT) serves as a coordination point for ATP. The Mg(2+) site is built by Q272, E284, and N286. Positions 272, 284, and 286 each coordinate Mn(2+).

This sequence belongs to the GARS family. Mg(2+) is required as a cofactor. It depends on Mn(2+) as a cofactor.

The enzyme catalyses 5-phospho-beta-D-ribosylamine + glycine + ATP = N(1)-(5-phospho-beta-D-ribosyl)glycinamide + ADP + phosphate + H(+). The protein operates within purine metabolism; IMP biosynthesis via de novo pathway; N(1)-(5-phospho-D-ribosyl)glycinamide from 5-phospho-alpha-D-ribose 1-diphosphate: step 2/2. This is Phosphoribosylamine--glycine ligase from Methanocorpusculum labreanum (strain ATCC 43576 / DSM 4855 / Z).